Consider the following 69-residue polypeptide: Conotoxin Lt5.10 (69 aa).

The signal sequence occupies residues 1–19; it reads MLCLPVFIILLLLASPAAP. A propeptide spanning residues 20 to 54 is cleaved from the precursor; that stretch reads KSLETRIQNDLIRAGLTDADLKTEKGFLSGLLNVA.

This sequence belongs to the conotoxin T superfamily. In terms of processing, contains 2 disulfide bonds that can be either 'C1-C3, C2-C4' or 'C1-C4, C2-C3', since these disulfide connectivities have been observed for conotoxins with cysteine framework V (for examples, see AC P0DQQ7 and AC P81755). As to expression, expressed by the venom duct.

Its subcellular location is the secreted. This Conus litteratus (Lettered cone) protein is Conotoxin Lt5.10.